The chain runs to 1095 residues: Solute carrier family 12 member 1 (1095 aa).

Over 1 to 173 the chain is Cytoplasmic; the sequence is MSVNIPSNSV…EEDVTGVVKF (173 aa). The RFXV motif signature appears at 16-19; the sequence is RFQV. Positions 26–45 are disordered; sequence HGSGAAMSDSTDPPHYEETS. Ser-57 and Ser-87 each carry phosphoserine. Thr-91, Thr-96, Thr-101, and Thr-114 each carry phosphothreonine. At Ser-116 the chain carries Phosphoserine. Ser-126 carries the post-translational modification Phosphoserine; by AMPK. Ser-144 carries the phosphoserine modification. The helical transmembrane segment at 174 to 194 threads the bilayer; the sequence is GWVKGVLVRCMLNIWGVMLFI. The Extracellular segment spans residues 195–197; sequence RLS. The helical transmembrane segment at 198-218 threads the bilayer; that stretch reads WIVGEAGIGLGVIIIGLSVVV. Residues 219–255 lie on the Cytoplasmic side of the membrane; sequence TTLTGISMSAICTNGVVRGGGAYYLISRSLGPEFGGS. The helical transmembrane segment at 256-276 threads the bilayer; sequence IGLIFRFANAVRVAMYVVGFA. Residues 277–298 lie on the Extracellular side of the membrane; the sequence is ETVVDLLKESDSMMVDPTNDIR. A helical membrane pass occupies residues 299–319; sequence IIGSITVVILLGISVAGMEWE. The Cytoplasmic portion of the chain corresponds to 320 to 323; sequence AKAQ. Residues 324–344 form a helical membrane-spanning segment; that stretch reads VILLVILLIGIANFFIGTVIP. Residues 345 to 375 lie on the Extracellular side of the membrane; that stretch reads SNNEKKSRGFFNYQASIFAENFGPSFTEGEG. The chain crosses the membrane as a helical span at residues 376–396; it reads FFSVFAIFFPAATGILAGANI. Topologically, residues 397-413 are cytoplasmic; sequence SGDLEDPQDAIPRGTML. The helical transmembrane segment at 414–434 threads the bilayer; sequence AIFITTVAYIGVAICVRACVV. Over 435–546 the chain is Extracellular; sequence RDATGSMNDT…NNEPLRGYFL (112 aa). N-linked (GlcNAc...) asparagine glycosylation is found at Asn-442 and Asn-452. The next 2 helical transmembrane spans lie at 547-567 and 568-588; these read TFVIAMAFILIAELNVIAPII and SNFFLASYALINFSCFHASYA. Residues 589 to 605 are Extracellular-facing; that stretch reads KSPGWRPAYGIYNMWVS. A helical membrane pass occupies residues 606–626; that stretch reads LFGAILCCAVMFVINWWAAVI. Residues 627–1095 are Cytoplasmic-facing; sequence TYVIELFLYI…NHKNVLTFYS (469 aa).

This sequence belongs to the SLC12A transporter family. As to quaternary structure, when phosphorylated, interacts with PPP3CB. In terms of processing, phosphorylated at Ser-87, Thr-96 and Thr-101 by OXSR1/OSR1 and STK39/SPAK downstream of WNK kinases (WNK1, WNK2, WNK3 or WNK4), promoting its activity. Expressed predominantly in kidney (at protein level).

The protein localises to the apical cell membrane. It carries out the reaction K(+)(out) + 2 chloride(out) + Na(+)(out) = K(+)(in) + 2 chloride(in) + Na(+)(in). Its activity is regulated as follows. Activated following phosphorylation by OXSR1/OSR1 and STK39/SPAK downstream of WNK kinases (WNK1, WNK2, WNK3 or WNK4). Renal sodium, potassium and chloride ion cotransporter that mediates the transepithelial NaCl reabsorption in the thick ascending limb and plays an essential role in the urinary concentration and volume regulation. Electrically silent transporter system. The chain is Solute carrier family 12 member 1 (Slc12a1) from Rattus norvegicus (Rat).